Consider the following 428-residue polypeptide: E3 ubiquitin-protein ligase RNF128 (428 aa).

The N-terminal stretch at 1–38 (MGPPPGIGVYCRGGCGAARLLAWCFLLALSPHAPGSRG) is a signal peptide. N-linked (GlcNAc...) asparagine glycosylation is found at Asn48, Asn59, and Asn101. The 109-residue stretch at 75 to 183 (SPLEPVSGVL…LKGTKILQSI (109 aa)) folds into the PA domain. Residues 208 to 228 (IFFVSVSFFIITAATVGYFIF) form a helical membrane-spanning segment. The RING-type; atypical zinc finger occupies 277–318 (CAVCIELYKPNDLVRILTCNHIFHKTCVDPWLLEHRTCPMCK). The span at 342 to 351 (VSNEASNTAS) shows a compositional bias: polar residues. A disordered region spans residues 342–428 (VSNEASNTAS…QEAAVREIKS (87 aa)).

Post-translationally, auto-ubiquitinated. Controls the development of T-cell clonal anergy by ubiquitination. Expressed in brain, kidney, heart, liver, ovary, testis and thymus. Expression increased as early as 4 hours by 5- to 7-fold in anergized cultures as compared to resting or activated cells.

The protein resides in the cytoplasm. It is found in the endomembrane system. The protein localises to the cytoskeleton. Its subcellular location is the perinuclear region. It catalyses the reaction S-ubiquitinyl-[E2 ubiquitin-conjugating enzyme]-L-cysteine + [acceptor protein]-L-lysine = [E2 ubiquitin-conjugating enzyme]-L-cysteine + N(6)-ubiquitinyl-[acceptor protein]-L-lysine.. Its pathway is protein modification; protein ubiquitination. In terms of biological role, E3 ubiquitin-protein ligase that catalyzes 'Lys-27', 'Lys-48'- or 'Lys-63'-linked polyubiquitin chains formation and plays a role in different biological processes such as modulation of immune response, cytoskeletal dynamics or protein homeostasis. Inhibits IL2 and IL4 transcription, thereby playing an important role in the induction of the anergic phenotype, a long-term stable state of T-lymphocyte unresponsiveness to antigenic stimulation associated with the blockade of interleukin production. Ubiquitinates ARPC5 with 'Lys-48' linkages and COR1A with 'Lys-63' linkages leading to their degradation, down-regulation of these cytoskeletal components results in impaired lamellipodium formation and reduced accumulation of F-actin at the immunological synapse. Functions in the patterning of the dorsal ectoderm; sensitizes ectoderm to respond to neural-inducing signals. Plays a positive role in innate immune response by promoting 'Lys-63'-linked ubiquitination of TBK1 after RNA- or DNA-virus infection. Regulates alveolar macrophage activation and neutrophil infiltration by interacting with TLR4, targeting it for degradation, and inhibiting NF-kappa-B activation, hence decreasing pro-inflammatory cytokines. Negatively regulates the IL-3/STAT5 signaling pathway by facilitating 'Lys-27'-linked polyubiquitination of IL3RA leading to its degradation via lysosomal pathway. Directly regulates the N-glycosylation process in the endoplasmic reticulum by targeting the glycosyl-transferase RPN1 for ubiquitination and degradation. Other substrates targeted for degradation by RNF128 include transmembrane proteins CD40L, CD83 or the tetraspanin CD151. The protein is E3 ubiquitin-protein ligase RNF128 (Rnf128) of Mus musculus (Mouse).